Reading from the N-terminus, the 255-residue chain is 5'-nucleotidase SurE (255 aa).

A divalent metal cation contacts are provided by Asp-8, Asp-9, Ser-40, and Asn-92.

The protein belongs to the SurE nucleotidase family. A divalent metal cation is required as a cofactor.

It is found in the cytoplasm. The enzyme catalyses a ribonucleoside 5'-phosphate + H2O = a ribonucleoside + phosphate. Its function is as follows. Nucleotidase that shows phosphatase activity on nucleoside 5'-monophosphates. The polypeptide is 5'-nucleotidase SurE (Brucella abortus (strain S19)).